The sequence spans 272 residues: Indole-3-glycerol phosphate synthase (272 aa).

It belongs to the TrpC family.

The enzyme catalyses 1-(2-carboxyphenylamino)-1-deoxy-D-ribulose 5-phosphate + H(+) = (1S,2R)-1-C-(indol-3-yl)glycerol 3-phosphate + CO2 + H2O. The protein operates within amino-acid biosynthesis; L-tryptophan biosynthesis; L-tryptophan from chorismate: step 4/5. The chain is Indole-3-glycerol phosphate synthase from Mycolicibacterium gilvum (strain PYR-GCK) (Mycobacterium gilvum (strain PYR-GCK)).